Here is a 217-residue protein sequence, read N- to C-terminus: Probable transaldolase (217 aa).

K83 acts as the Schiff-base intermediate with substrate in catalysis.

Belongs to the transaldolase family. Type 3B subfamily.

It localises to the cytoplasm. It carries out the reaction D-sedoheptulose 7-phosphate + D-glyceraldehyde 3-phosphate = D-erythrose 4-phosphate + beta-D-fructose 6-phosphate. It participates in carbohydrate degradation; pentose phosphate pathway; D-glyceraldehyde 3-phosphate and beta-D-fructose 6-phosphate from D-ribose 5-phosphate and D-xylulose 5-phosphate (non-oxidative stage): step 2/3. Functionally, transaldolase is important for the balance of metabolites in the pentose-phosphate pathway. This Sinorhizobium medicae (strain WSM419) (Ensifer medicae) protein is Probable transaldolase.